The primary structure comprises 246 residues: Carbonic anhydrase (246 aa).

An N-terminal signal peptide occupies residues 1-22 (MKTSLGKAALLALSMMPVTVFA). One can recognise an Alpha-carbonic anhydrase domain in the interval 23-246 (SHWSYEGEGS…QPLNGRVVIE (224 aa)). Cys-46 and Cys-201 are joined by a disulfide. His-84 (proton acceptor) is an active-site residue. Positions 111, 113, and 130 each coordinate Zn(2+). A substrate-binding site is contributed by 197 to 198 (TT).

The protein belongs to the alpha-carbonic anhydrase family. The cofactor is Zn(2+).

The protein localises to the periplasm. It carries out the reaction hydrogencarbonate + H(+) = CO2 + H2O. Reversible hydration of carbon dioxide. The protein is Carbonic anhydrase (cah) of Klebsiella pneumoniae.